The chain runs to 1034 residues: Ubiquitin-like-specific protease 2 (1034 aa).

Disordered stretches follow at residues 1–42 (MSAR…FRKD), 71–110 (IELS…HSSL), 388–419 (SHAV…DDAT), 731–800 (IDQS…PIRH), 841–960 (GVSS…DSLG), and 983–1034 (SSPT…DEDP). Positions 19–33 (SSRASSPRSSASLPP) are enriched in low complexity. Positions 74–85 (SDNDVDNNDEGE) are enriched in acidic residues. Over residues 743–756 (TSEPPCSRSSSIST) the composition is skewed to low complexity. At S788 the chain carries Phosphoserine. Polar residues-rich tracts occupy residues 845–856 (PIKNDQALSSTH), 876–904 (QLSS…VISD), and 912–923 (GVNSESKNTSGI). S903 bears the Phosphoserine mark. Phosphoserine is present on residues S983 and S984. Over residues 992–1017 (TSATSKGSNAQLLSNYGDENNQSQDS) the composition is skewed to polar residues.

The protein belongs to the peptidase C48 family.

Functionally, insertion mutation in SMT4 confers temperature and benomyl sensitivity; high copy suppressor of a temperature sensitive mutation in MIF2. The chain is Ubiquitin-like-specific protease 2 (ULP2) from Saccharomyces cerevisiae (strain ATCC 204508 / S288c) (Baker's yeast).